Reading from the N-terminus, the 181-residue chain is NADH-quinone oxidoreductase subunit I (181 aa).

4Fe-4S ferredoxin-type domains lie at 52–81 (TRDS…LKKG) and 91–120 (KFFR…LTPD). C61, C64, C67, C71, C100, C103, C106, and C110 together coordinate [4Fe-4S] cluster.

Belongs to the complex I 23 kDa subunit family. As to quaternary structure, NDH-1 is composed of 13 different subunits. Subunits NuoA, H, J, K, L, M, N constitute the membrane sector of the complex. The cofactor is [4Fe-4S] cluster.

The protein resides in the cell inner membrane. It catalyses the reaction a quinone + NADH + 5 H(+)(in) = a quinol + NAD(+) + 4 H(+)(out). Functionally, NDH-1 shuttles electrons from NADH, via FMN and iron-sulfur (Fe-S) centers, to quinones in the respiratory chain. The immediate electron acceptor for the enzyme in this species is believed to be ubiquinone. Couples the redox reaction to proton translocation (for every two electrons transferred, four hydrogen ions are translocated across the cytoplasmic membrane), and thus conserves the redox energy in a proton gradient. This chain is NADH-quinone oxidoreductase subunit I, found in Blochmanniella pennsylvanica (strain BPEN).